Consider the following 370-residue polypeptide: Putative F-box protein At1g46984 (370 aa).

The region spanning 18–64 is the F-box domain; it reads YTQLSTLPIDLIIEILSRLPMNSIAICRLVSKQWASILQSSDFTESF.

The polypeptide is Putative F-box protein At1g46984 (Arabidopsis thaliana (Mouse-ear cress)).